The chain runs to 207 residues: Ribosomal RNA small subunit methyltransferase G (207 aa).

Residues Gly73, Leu78, 124-125 (VE), and Arg139 each bind S-adenosyl-L-methionine.

It belongs to the methyltransferase superfamily. RNA methyltransferase RsmG family.

The protein localises to the cytoplasm. The enzyme catalyses guanosine(527) in 16S rRNA + S-adenosyl-L-methionine = N(7)-methylguanosine(527) in 16S rRNA + S-adenosyl-L-homocysteine. Functionally, specifically methylates the N7 position of guanine in position 527 of 16S rRNA. This Salmonella arizonae (strain ATCC BAA-731 / CDC346-86 / RSK2980) protein is Ribosomal RNA small subunit methyltransferase G.